The primary structure comprises 103 residues: Integration host factor subunit beta (103 aa).

Belongs to the bacterial histone-like protein family. In terms of assembly, heterodimer of an alpha and a beta chain.

Its function is as follows. This protein is one of the two subunits of integration host factor, a specific DNA-binding protein that functions in genetic recombination as well as in transcriptional and translational control. The polypeptide is Integration host factor subunit beta (Sinorhizobium medicae (strain WSM419) (Ensifer medicae)).